The chain runs to 252 residues: Imidazole glycerol phosphate synthase subunit HisF (252 aa).

Active-site residues include Asp11 and Asp130.

Belongs to the HisA/HisF family. As to quaternary structure, heterodimer of HisH and HisF.

It is found in the cytoplasm. It catalyses the reaction 5-[(5-phospho-1-deoxy-D-ribulos-1-ylimino)methylamino]-1-(5-phospho-beta-D-ribosyl)imidazole-4-carboxamide + L-glutamine = D-erythro-1-(imidazol-4-yl)glycerol 3-phosphate + 5-amino-1-(5-phospho-beta-D-ribosyl)imidazole-4-carboxamide + L-glutamate + H(+). Its pathway is amino-acid biosynthesis; L-histidine biosynthesis; L-histidine from 5-phospho-alpha-D-ribose 1-diphosphate: step 5/9. IGPS catalyzes the conversion of PRFAR and glutamine to IGP, AICAR and glutamate. The HisF subunit catalyzes the cyclization activity that produces IGP and AICAR from PRFAR using the ammonia provided by the HisH subunit. This chain is Imidazole glycerol phosphate synthase subunit HisF, found in Anoxybacillus flavithermus (strain DSM 21510 / WK1).